The primary structure comprises 350 residues: Uroporphyrinogen decarboxylase (350 aa).

Substrate is bound by residues 23–27, D73, Y150, T205, and H322; that span reads RQAGR.

It belongs to the uroporphyrinogen decarboxylase family. Homodimer.

It localises to the cytoplasm. It carries out the reaction uroporphyrinogen III + 4 H(+) = coproporphyrinogen III + 4 CO2. It functions in the pathway porphyrin-containing compound metabolism; protoporphyrin-IX biosynthesis; coproporphyrinogen-III from 5-aminolevulinate: step 4/4. Its function is as follows. Catalyzes the decarboxylation of four acetate groups of uroporphyrinogen-III to yield coproporphyrinogen-III. This is Uroporphyrinogen decarboxylase from Methylococcus capsulatus (strain ATCC 33009 / NCIMB 11132 / Bath).